A 332-amino-acid chain; its full sequence is Protein FAM131B (332 aa).

The segment at 1 to 22 is disordered; it reads MDSTSSLHGSSLHRPSTEQTRT. Phosphoserine is present on Ser47. The tract at residues 95-114 is disordered; the sequence is PTIQPQHSHEAVRRDTDAYS. Over residues 101–111 the composition is skewed to basic and acidic residues; sequence HSHEAVRRDTD. Ser114 and Ser117 each carry phosphoserine. Residues 221–332 are disordered; it reads LGPAFDDSQP…FDEEEGDANN (112 aa). 2 stretches are compositionally biased toward basic and acidic residues: residues 272–281 and 288–302; these read PVEEEKRPLA and AGCRDLESLSPREDP. Ser295, Ser297, and Ser313 each carry phosphoserine. At Thr316 the chain carries Phosphothreonine. Phosphoserine occurs at positions 317, 318, and 322. Residues 323–332 are compositionally biased toward acidic residues; the sequence is FDEEEGDANN.

The protein belongs to the FAM131 family.

In Mus musculus (Mouse), this protein is Protein FAM131B (Fam131b).